The sequence spans 834 residues: ENENLGDEILEDFETYWEDVNDRLMVSRMVSDSVIKGIVSAVEQEAAERLVTKDMELANLKEYLQFHEGGLSKTELESFGSLMSQNELESMDFRKCMTLSDVFMEHGKMGEFLDGLRSLAKDEFKKLKKSIDELRGSNSVSNKISRSEMAKLEGILQEKESGIWVQLDKTLDNIRMMVDTVFKRMDVMLQLSKTSLHHWQEEHLIKVELESMVMQCVIRTVQEEFEYKLWDQYAQLCGDRNEKLNAISSLRTELDAVLKSLSSSENGHVTSHGSHDADFFTRKKSSEYVTSTKSVWDGNGKLEDSKTDIPENFDAVTLKHMSKDEMVTYFNNIMTKMKRHHESILQKKTDEYFVLRAEYLNLRGGSVVPHKKDKGESDILRKKIPEIIFKLDDILVENEKHPAFTQETLSFGNLKDRLDNLLSENHQLRDLVKEKKNEVKSLLSQVSDATEKRLQHSLAEAGMLKQIGELNLAMEESLIGGSVREDVYTCFLRDLSGGARNEVEELNLGFNMINESNDTSAGSTRKIEIEDLEMECLIMQEICGVISGEGIKEAKDMLKELYLEHLNEKEIRTSLDTKLIEMENKLKFEVEEKDRLMQMEKLVNEKEKLATDASAALAKERVQSEQVRQELNAAKEFASQQQTLASGCNKEVNVIKGQLAEAVERIEVLKEEVAQLNISLEEKTEELKEANHRANMVLAISEERQTLLSSLESKEIALRKQVEKIIGNINESSKMIADFECRVTGRLKTNNARFEHSFSQMDCLVKKANLLRRTTLLYQQRLEKRCSDLKLAEAEVDLLGDEVDTLLSLVEKIYIALDHYSPVLQHYPGDYGDS.

Coiled-coil stretches lie at residues Ser-410–His-456, Ser-574–Ile-700, and Ala-792–Lys-812.

In terms of assembly, interacts with MAF1. As to expression, expressed in seedlings, leaves and fruits.

It localises to the golgi apparatus. The protein localises to the cytoplasm. In Solanum lycopersicum (Tomato), this protein is WPP domain-associated protein (WAP).